Here is a 62-residue protein sequence, read N- to C-terminus: Large ribosomal subunit protein bL32 (62 aa).

Basic residues predominate over residues 1–16 (MAVPKRKTSPMKRGFR). A disordered region spans residues 1–62 (MAVPKRKTSP…QILTPKNKEA (62 aa)). Positions 28–44 (VEDKDSGELRRPHHVDL) are enriched in basic and acidic residues.

This sequence belongs to the bacterial ribosomal protein bL32 family.

This chain is Large ribosomal subunit protein bL32, found in Methylocella silvestris (strain DSM 15510 / CIP 108128 / LMG 27833 / NCIMB 13906 / BL2).